Consider the following 403-residue polypeptide: Aspartic protease PEP1 (403 aa).

The first 20 residues, M1–A20, serve as a signal peptide directing secretion. Positions A21–A67 are cleaved as a propeptide — activation peptide. The region spanning Y82 to A400 is the Peptidase A1 domain. D98 is a catalytic residue. 2 N-linked (GlcNAc...) asparagine glycosylation sites follow: N159 and N270. D293 is a catalytic residue. A disulfide bridge connects residues C329 and C361.

The protein belongs to the peptidase A1 family.

Its subcellular location is the secreted. It carries out the reaction Hydrolysis of proteins with broad specificity. Generally favors hydrophobic residues in P1 and P1', but also accepts Lys in P1, which leads to activation of trypsinogen. Does not clot milk.. Its function is as follows. Secreted aspartic endopeptidase that allows assimilation of proteinaceous substrates. Can catalyze hydrolysis of the major structural proteins of basement membrane, elastin, collagen, and laminin. Thought to play a significant role in virulence. This Arthroderma benhamiae (strain ATCC MYA-4681 / CBS 112371) (Trichophyton mentagrophytes) protein is Aspartic protease PEP1 (PEP1).